Here is a 464-residue protein sequence, read N- to C-terminus: MDSLLWATWVLCLLNLWGVALGHLHLECDFITQLRDDELACLQAAEGTNNSSMGCPGTWDGLLCWPPTGSGQWVSLPCPEFFSHFGSDPGAVKRDCTITGWSDPFPPYPVACPVPLELLTEEKSYFSTVKIIYTTGHSISIVALCVAIAILVALRRLHCPRNYIHTQLFATFILKASAVFLKDAAVFQGDSTDHCSMSTILCKVSVAVSHFATMTNFSWLLAEAVYLSCLLASTSPRSKPAFWWLVLAGWGLPVLCTGTWVGCKLAFEDTACWDLDDSSPYWWIIKGPIVLSVGVNFGLFLNIICILLRKLGPAQGGLHTRAQYCNYLLPWSCPLPQVPRERTDLGPSSHEITVQESGTRNCQLPWRLSKSTLLLIPLFGIHYIIFNFLPDSAGLGIRLPLELGLGSFQGFVVAVLYCFLNQEVRTEISRKWYGHDPELLPARRTCTEWTTPPRSRVKVLTSEC.

An N-terminal signal peptide occupies residues 1-22 (MDSLLWATWVLCLLNLWGVALG). Topologically, residues 23 to 130 (HLHLECDFIT…EEKSYFSTVK (108 aa)) are extracellular. Cystine bridges form between Cys41–Cys64, Cys55–Cys96, and Cys78–Cys112. Residue Asn50 is glycosylated (N-linked (GlcNAc...) asparagine). A helical transmembrane segment spans residues 131 to 151 (IIYTTGHSISIVALCVAIAIL). The Cytoplasmic portion of the chain corresponds to 152–167 (VALRRLHCPRNYIHTQ). Residues 168–188 (LFATFILKASAVFLKDAAVFQ) form a helical membrane-spanning segment. Residues 189–210 (GDSTDHCSMSTILCKVSVAVSH) lie on the Extracellular side of the membrane. A helical membrane pass occupies residues 211–231 (FATMTNFSWLLAEAVYLSCLL). Topologically, residues 232 to 240 (ASTSPRSKP) are cytoplasmic. The helical transmembrane segment at 241-261 (AFWWLVLAGWGLPVLCTGTWV) threads the bilayer. Residues 262–283 (GCKLAFEDTACWDLDDSSPYWW) are Extracellular-facing. The chain crosses the membrane as a helical span at residues 284–304 (IIKGPIVLSVGVNFGLFLNII). The Cytoplasmic segment spans residues 305–372 (CILLRKLGPA…QLPWRLSKST (68 aa)). Residues 373 to 393 (LLLIPLFGIHYIIFNFLPDSA) traverse the membrane as a helical segment. The Extracellular segment spans residues 394 to 398 (GLGIR). The helical transmembrane segment at 399–419 (LPLELGLGSFQGFVVAVLYCF) threads the bilayer. Residues 420–464 (LNQEVRTEISRKWYGHDPELLPARRTCTEWTTPPRSRVKVLTSEC) lie on the Cytoplasmic side of the membrane.

It belongs to the G-protein coupled receptor 2 family. Pituitary gland.

Its subcellular location is the cell membrane. In terms of biological role, receptor for GRF, coupled to G proteins which activate adenylyl cyclase. Stimulates somatotroph cell growth, growth hormone gene transcription and growth hormone secretion. This is Growth hormone-releasing hormone receptor (Ghrhr) from Rattus norvegicus (Rat).